We begin with the raw amino-acid sequence, 461 residues long: Porin AaxA (461 aa).

Positions 1-22 are cleaved as a signal peptide; sequence MSFRSILLTALLSLSFTNTMQA.

It belongs to the OprB family.

It localises to the cell outer membrane. Facilitates L-arginine uptake, as part of the AaxABC system. The arginine uptake by the bacterium in the macrophage may be a virulence factor against the host innate immune response. This Chlamydia muridarum (strain MoPn / Nigg) protein is Porin AaxA (aaxA).